Reading from the N-terminus, the 182-residue chain is 5-formyltetrahydrofolate cyclo-ligase (182 aa).

A disordered region spans residues 1–21; sequence MIRQRRRALTPEQQQEMGQQA. The segment covering 11–21 has biased composition (polar residues); the sequence is PEQQQEMGQQA. ATP-binding positions include 128–135 and Asp-167; that span reads GMGGGFYD.

This sequence belongs to the 5-formyltetrahydrofolate cyclo-ligase family.

It catalyses the reaction (6S)-5-formyl-5,6,7,8-tetrahydrofolate + ATP = (6R)-5,10-methenyltetrahydrofolate + ADP + phosphate. The protein operates within one-carbon metabolism; tetrahydrofolate interconversion. Its function is as follows. Involved in the removal of 5-formyltetrahydrofolate. In vitro, it is a potent inhibitor of various folate-dependent enzymes in the C1 metabolism network and in vivo it might function as a folate storage. 5-formyltetrahydrofolate is also used as an antifolate rescue agent in cancer chemotherapy. Catalyzes the irreversible ATP-dependent transformation of 5-formyltetrahydrofolate (5-CHO-THF) to form 5,10-methenyltetrahydrofolate (5,10-CH=THF). The reverse reaction is catalyzed by the serine hydroxymethyltransferase GlyA (SHMT). The protein is 5-formyltetrahydrofolate cyclo-ligase (ygfA) of Escherichia coli O157:H7.